Consider the following 96-residue polypeptide: Protein Vpr (96 aa).

Positions 1 to 42 (MEQAPEDQGPQREPYNEWALELLEELKQEAVRHFPRPWLHNL) are homooligomerization. Serine 79, serine 94, and serine 96 each carry phosphoserine; by host.

The protein belongs to the HIV-1 VPR protein family. Homooligomer, may form homodimer. Interacts with p6-gag region of the Pr55 Gag precursor protein through a (Leu-X-X)4 motif near the C-terminus of the P6gag protein. Interacts with host UNG. May interact with host RAD23A/HHR23A. Interacts with host VPRBP/DCAF1, leading to hijack the CUL4A-RBX1-DDB1-DCAF1/VPRBP complex, mediating ubiquitination of host proteins such as TERT and ZGPAT and arrest of the cell cycle in G2 phase. In terms of processing, phosphorylated on several residues by host. These phosphorylations regulate VPR activity for the nuclear import of the HIV-1 pre-integration complex.

The protein resides in the virion. The protein localises to the host nucleus. It localises to the host extracellular space. In terms of biological role, during virus replication, may deplete host UNG protein, and incude G2-M cell cycle arrest. Acts by targeting specific host proteins for degradation by the 26S proteasome, through association with the cellular CUL4A-DDB1 E3 ligase complex by direct interaction with host VPRPB/DCAF-1. Cell cycle arrest reportedly occurs within hours of infection and is not blocked by antiviral agents, suggesting that it is initiated by the VPR carried into the virion. Additionally, VPR induces apoptosis in a cell cycle dependent manner suggesting that these two effects are mechanistically linked. Detected in the serum and cerebrospinal fluid of AIDS patient, VPR may also induce cell death to bystander cells. During virus entry, plays a role in the transport of the viral pre-integration (PIC) complex to the host nucleus. This function is crucial for viral infection of non-dividing macrophages. May act directly at the nuclear pore complex, by binding nucleoporins phenylalanine-glycine (FG)-repeat regions. This chain is Protein Vpr, found in Homo sapiens (Human).